We begin with the raw amino-acid sequence, 94 residues long: MSARCQITGRTVGFGKAVSHSHRRTRRRWPPNIQLKAYYLPSEDRRIKVRVSAQGIKVIDRDGHRGRRRAARAGSAPAHFARQAGSSLRTAAIL.

The disordered stretch occupies residues 63–94; that stretch reads GHRGRRRAARAGSAPAHFARQAGSSLRTAAIL. The segment covering 72–82 has biased composition (low complexity); the sequence is RAGSAPAHFAR. Positions 84–94 are enriched in polar residues; the sequence is AGSSLRTAAIL.

The protein belongs to the bacterial ribosomal protein bL28 family.

This chain is Large ribosomal subunit protein bL28A (rpmB1), found in Mycobacterium bovis (strain ATCC BAA-935 / AF2122/97).